The following is a 451-amino-acid chain: Phosphoglucosamine mutase (451 aa).

Ser-101 serves as the catalytic Phosphoserine intermediate. Mg(2+)-binding residues include Ser-101, Asp-240, Asp-242, and Asp-244. Ser-101 carries the phosphoserine modification.

The protein belongs to the phosphohexose mutase family. Mg(2+) serves as cofactor. Activated by phosphorylation.

It catalyses the reaction alpha-D-glucosamine 1-phosphate = D-glucosamine 6-phosphate. Functionally, catalyzes the conversion of glucosamine-6-phosphate to glucosamine-1-phosphate. The sequence is that of Phosphoglucosamine mutase from Streptococcus pyogenes serotype M2 (strain MGAS10270).